A 115-amino-acid polypeptide reads, in one-letter code: uncharacterized protein (115 aa).

The interval 1-115 is disordered; it reads MGETWFLTPN…ARSPERTPSP (115 aa). Residues 7–17 are compositionally biased toward polar residues; that stretch reads LTPNGQSSPGS. Composition is skewed to low complexity over residues 60–70 and 91–107; these read ASCAPRATPRR and SASAPAGPASSAPWPAR.

This is an uncharacterized protein from Human adenovirus C serotype 2 (HAdV-2).